Here is a 74-residue protein sequence, read N- to C-terminus: Large ribosomal subunit protein uL29 (74 aa).

The protein belongs to the universal ribosomal protein uL29 family.

The chain is Large ribosomal subunit protein uL29 from Cyanothece sp. (strain PCC 7425 / ATCC 29141).